The following is a 465-amino-acid chain: Ras GTPase-activating protein-binding protein 1 (465 aa).

The NTF2 domain occupies 11–133 (VGREFVRQYY…FYVHNDIFRY (123 aa)). Residues lysine 36, lysine 50, lysine 59, lysine 64, lysine 76, and lysine 123 each participate in a glycyl lysine isopeptide (Lys-Gly) (interchain with G-Cter in ubiquitin) cross-link. The acidic disordered region stretch occupies residues 142–224 (VTEPQEESEE…EAALEEAAPD (83 aa)). Phosphothreonine is present on threonine 143. The interval 144 to 330 (EPQEESEEEV…GEPGDVEPRR (187 aa)) is disordered. 2 stretches are compositionally biased toward acidic residues: residues 145 to 157 (PQEE…EEPE) and 184 to 205 (EHLE…EPEP). Residue serine 149 is modified to Phosphoserine. Phosphoserine occurs at positions 231, 248, and 251. Residues 248-257 (SWASVTSKNL) show a composition bias toward polar residues. Basic and acidic residues-rich tracts occupy residues 295 to 305 (PQRDQRVREQR) and 316 to 330 (PIRE…EPRR). In terms of domain architecture, RRM spans 338 to 413 (HQLFIGNLPH…VRLNVEEKKT (76 aa)). Residues lysine 351 and lysine 355 each participate in a glycyl lysine isopeptide (Lys-Gly) (interchain with G-Cter in ubiquitin) cross-link. Serine 371 is subject to Phosphoserine. Lysine 374 participates in a covalent cross-link: Glycyl lysine isopeptide (Lys-Gly) (interchain with G-Cter in ubiquitin). Lysine 374 carries the N6-acetyllysine; alternate modification. Lysine 374 participates in a covalent cross-link: Glycyl lysine isopeptide (Lys-Gly) (interchain with G-Cter in SUMO2); alternate. Lysine 391 is covalently cross-linked (Glycyl lysine isopeptide (Lys-Gly) (interchain with G-Cter in ubiquitin); alternate). Residues 408-464 (VEEKKTRAAREGDRRDNRLRGPGGPRGGPSGGMRGPPRGGMVQKPGFGVGRGITTPR) are RG-rich region. The segment covering 411-426 (KKTRAAREGDRRDNRL) has biased composition (basic and acidic residues). Residues 411–465 (KKTRAAREGDRRDNRLRGPGGPRGGPSGGMRGPPRGGMVQKPGFGVGRGITTPRQ) are disordered. Arginine 427 bears the Asymmetric dimethylarginine mark. Residues 428-445 (GPGGPRGGPSGGMRGPPR) are compositionally biased toward gly residues. Asymmetric dimethylarginine; alternate is present on arginine 433. Omega-N-methylarginine; alternate occurs at positions 433, 445, 458, and 464. Arginine 458 bears the Dimethylated arginine; alternate mark.

In terms of assembly, homodimer and oligomer. Component of a TAU mRNP complex, at least composed of IGF2BP1, ELAVL4 and G3BP1. Binds to the SH3 domain of Ras GTPase-activating protein (RASA1) in proliferating cells. No interaction in quiescent cells. Interacts (via NTF2 domain) with USP10; inhibiting stress granule formation by lowering G3BP1 valence. Interacts (via NTF2 domain) with CAPRIN1; promoting stress granule formation by lowering the saturation-concentration of G3BP1. Interacts (via NTF2 domain) with UBAP2L; promoting stress granule formation. Associates (via RG-rich region) with 40S ribosome subunits. Interacts with RPTOR and SPAG5; this complex is increased by oxidative stress. Interacts with ATXN2L. Interacts with STYXL1. Interacts with CGAS (via N-terminus); this interaction promotes the DNA-binding and activation of CGAS. Interacts (via C-terminus) with RIGI. Interacts with PABPC1. Interacts with QKI (isoforms QKI6 and QKI7); directing N(7)-methylguanine-containing mRNAs to stress granules. Mg(2+) is required as a cofactor. In terms of processing, phosphorylation of the acidic disordered region regulates stress granule assembly. RASA1-dependent phosphorylation of Ser-149 induces a conformational change that prevents self-association. Dephosphorylation after HRAS activation is required for stress granule assembly. Ser-149 phosphorylation induces partial nuclear localization. Post-translationally, arg-435 is dimethylated, probably to asymmetric dimethylarginine. Ubiquitinated by TRIM21 via 'Lys-63'-linked polyubiquitination in the NTF2 domain in response to heat shock, leading to stress granule disassembly: ubiquitination promotes interaction with the FAF2 adapter, followed by interaction with VCP, which extracts G3BP1 from stress granules, leading to stress granule disassembly. In case of prolonged stress, ubiquitination by TRIM21 leads to autophagy-dependent degradation of G3BP1 via recruitment of ubiquitinated G3BP1 by SQSTM1 and/or CALCOCO2 to autophagosomes. As to expression, ubiquitous.

It localises to the cytoplasm. The protein localises to the cytosol. It is found in the perikaryon. Its subcellular location is the stress granule. The protein resides in the nucleus. It carries out the reaction ATP + H2O = ADP + phosphate + H(+). With respect to regulation, under physiological conditions, G3BP1 adopts a compact state that is stabilized by intramolecular interactions between the RG-rich and the acidic regions that inhibit phase separation. Upon stress, polysomes disassemble and mRNAs are released in an unfolded protein-free state. Binding of unfolded mRNA to G3BP1 outcompetes the intramolecular interactions and RNA-bound G3BP1 adopts an expanded conformation in which the RG-rich region becomes exposed to engage in protein-protein and protein-RNA interactions, allowing physical cross-linking of RNA molecules to form protein-RNA condensates, leading to liquid-liquid phase separation (LLPS). Its function is as follows. Protein involved in various processes, such as stress granule formation and innate immunity. Plays an essential role in stress granule formation. Stress granules are membraneless compartments that store mRNAs and proteins, such as stalled translation pre-initiation complexes, in response to stress. Promotes formation of stress granules phase-separated membraneless compartment by undergoing liquid-liquid phase separation (LLPS) upon unfolded RNA-binding: functions as a molecular switch that triggers RNA-dependent LLPS in response to a rise in intracellular free RNA concentrations. Also acts as an ATP- and magnesium-dependent helicase: unwinds DNA/DNA, RNA/DNA, and RNA/RNA substrates with comparable efficiency. Acts unidirectionally by moving in the 5' to 3' direction along the bound single-stranded DNA. Unwinds preferentially partial DNA and RNA duplexes having a 17 bp annealed portion and either a hanging 3' tail or hanging tails at both 5'- and 3'-ends. Plays an essential role in innate immunity by promoting CGAS and RIGI activity. Participates in the DNA-triggered cGAS/STING pathway by promoting the DNA binding and activation of CGAS. Triggers the condensation of cGAS, a process probably linked to the formation of membrane-less organelles. Also enhances RIGI-induced type I interferon production probably by helping RIGI at sensing pathogenic RNA. May also act as a phosphorylation-dependent sequence-specific endoribonuclease in vitro: Cleaves exclusively between cytosine and adenine and cleaves MYC mRNA preferentially at the 3'-UTR. This is Ras GTPase-activating protein-binding protein 1 (G3bp1) from Mus musculus (Mouse).